A 309-amino-acid polypeptide reads, in one-letter code: tRNA pseudouridine synthase B (309 aa).

Asp39 serves as the catalytic Nucleophile. The PUA domain maps to 229–306 (LPRVVVHQES…ERVLTLRKVF (78 aa)).

This sequence belongs to the pseudouridine synthase TruB family. Type 1 subfamily.

The catalysed reaction is uridine(55) in tRNA = pseudouridine(55) in tRNA. In terms of biological role, responsible for synthesis of pseudouridine from uracil-55 in the psi GC loop of transfer RNAs. The chain is tRNA pseudouridine synthase B from Thermotoga petrophila (strain ATCC BAA-488 / DSM 13995 / JCM 10881 / RKU-1).